The chain runs to 261 residues: uncharacterized protein (261 aa).

This is an uncharacterized protein from Saccharomyces cerevisiae (strain ATCC 204508 / S288c) (Baker's yeast).